A 306-amino-acid chain; its full sequence is Putative beta-lactamase HcpD (306 aa).

The signal sequence occupies residues 1 to 25; sequence MIKSWTKKWFLILFLMASCSSYLVA. TPR repeat units lie at residues 28–61, 96–133, 168–205, and 240–277; these read GEKY…RVGV, HLAC…KGGV, GISC…KDGA, and GSGC…GFSG. Disulfide bonds link Cys-55-Cys-63, Cys-91-Cys-99, Cys-127-Cys-135, Cys-163-Cys-171, Cys-199-Cys-207, Cys-235-Cys-243, and Cys-271-Cys-279.

This sequence belongs to the hcp beta-lactamase family.

The protein resides in the secreted. It carries out the reaction a beta-lactam + H2O = a substituted beta-amino acid. Functionally, may hydrolyze 6-aminopenicillinic acid and 7-aminocephalosporanic acid (ACA) derivatives. Binds to penicillin. This is Putative beta-lactamase HcpD (hcpD) from Helicobacter pylori (strain ATCC 700392 / 26695) (Campylobacter pylori).